We begin with the raw amino-acid sequence, 317 residues long: LVEKFGIDPNNAFAFWDWVGGRYSVCSAVGVLPLSLQYGFSVVEKFLQGAHSIDQHFSSAPFEKNIPVLLGLLSVWNVSFLGYPARAILPYSQALEKLAPHIQQVSMESNGKGVSIDGLPLPFESGEIDFGEPGTNGQHSFYQLIHQGRVIPCDFIGVVKSQQPVYLKGEVVNNHDELMSNFFAQPDALAYGKTPAQLKKENVSEHLIPHKTFTGNRPSLSILLPTLDAYRIGQLLAIYEHRVAVQGFVWGINSFDQWGVELGKSLATQVRKQLHASRVKGEPVEEGFNFSTKTLLTRYLQATTDVPADPSTLLPNI.

Catalysis depends on glutamate 108, which acts as the Proton donor. Catalysis depends on residues histidine 139 and lysine 264.

The protein belongs to the GPI family. Homodimer.

It localises to the cytoplasm. The enzyme catalyses alpha-D-glucose 6-phosphate = beta-D-fructose 6-phosphate. It participates in carbohydrate degradation; glycolysis; D-glyceraldehyde 3-phosphate and glycerone phosphate from D-glucose: step 2/4. This chain is Glucose-6-phosphate isomerase, cytosolic 2B (PGIC2-B), found in Clarkia lewisii (Farewell-to-spring).